The primary structure comprises 459 residues: Inositol-trisphosphate 3-kinase A (459 aa).

Positions 1 to 29 (MTLPGRPTGMARPRGAGPCSPGLERAPRR) are disordered. Arginine 35, arginine 55, and arginine 62 each carry omega-N-methylarginine. The segment at 49-164 (AAAGEPRARG…TSEDVGQKSH (116 aa)) is disordered. Residues 116 to 132 (RRLSTSSLSSTGSSSLL) show a composition bias toward low complexity. Phosphoserine is present on residues serine 135 and serine 195. Residues serine 195, lysine 207, 247–249 (QDL), and aspartate 260 each bind ATP. Residues lysine 262 and arginine 283 each coordinate substrate. Positions 285-293 (DMYKKMLAV) are calmodulin-binding. 310–317 (KPRYMQWR) contacts substrate. Residues lysine 334 and aspartate 414 each coordinate ATP. Lysine 417 contacts substrate.

The protein belongs to the inositol phosphokinase (IPK) family.

Its subcellular location is the cytoplasm. It is found in the cytoskeleton. The enzyme catalyses 1D-myo-inositol 1,4,5-trisphosphate + ATP = 1D-myo-inositol 1,3,4,5-tetrakisphosphate + ADP + H(+). Its activity is regulated as follows. Activated by calcium/calmodulin. In terms of biological role, catalyzes the phosphorylation of 1D-myo-inositol 1,4,5-trisphosphate (InsP3) into 1D-myo-inositol 1,3,4,5-tetrakisphosphate and participates to the regulation of calcium homeostasis. The sequence is that of Inositol-trisphosphate 3-kinase A from Mus musculus (Mouse).